The sequence spans 77 residues: Conotoxin Cl6.12 (77 aa).

Positions 1 to 20 (MKFYLLLTAALLLTAVIIEA) are cleaved as a signal peptide. The propeptide occupies 21–36 (APTDHQDEARDLMREE). Intrachain disulfides connect Cys43–Cys58, Cys51–Cys62, and Cys57–Cys68.

As to expression, expressed by the venom duct.

Its subcellular location is the secreted. The sequence is that of Conotoxin Cl6.12 from Californiconus californicus (California cone).